Here is a 215-residue protein sequence, read N- to C-terminus: Large ribosomal subunit protein uL1 (215 aa).

The protein belongs to the universal ribosomal protein uL1 family. Part of the 50S ribosomal subunit.

Its function is as follows. Binds directly to 23S rRNA. Probably involved in E site tRNA release. In terms of biological role, protein L1 is also a translational repressor protein, it controls the translation of its operon by binding to its mRNA. In Methanospirillum hungatei JF-1 (strain ATCC 27890 / DSM 864 / NBRC 100397 / JF-1), this protein is Large ribosomal subunit protein uL1.